A 305-amino-acid chain; its full sequence is NAD kinase (305 aa).

The active-site Proton acceptor is Asp-76. NAD(+) contacts are provided by residues 76–77, 150–151, Arg-161, and Asp-180; these read DG and ND.

The protein belongs to the NAD kinase family. The cofactor is a divalent metal cation.

It is found in the cytoplasm. The catalysed reaction is NAD(+) + ATP = ADP + NADP(+) + H(+). Involved in the regulation of the intracellular balance of NAD and NADP, and is a key enzyme in the biosynthesis of NADP. Catalyzes specifically the phosphorylation on 2'-hydroxyl of the adenosine moiety of NAD to yield NADP. The protein is NAD kinase of Treponema pallidum (strain Nichols).